The primary structure comprises 519 residues: Laccase-2 (519 aa).

Residues 1-20 (MGLQRFSFFVTLALVARSLA) form the signal peptide. Plastocyanin-like domains follow at residues 22–147 (IGPV…FVVY) and 159–301 (VDNE…ILRY). An N-linked (GlcNAc...) asparagine glycan is attached at N74. Cu cation-binding residues include H84, H86, H129, and H131. 2 disulfides stabilise this stretch: C105–C508 and C137–C225. N-linked (GlcNAc...) asparagine glycans are attached at residues N161, N228, N237, N271, N353, and N361. The region spanning 368 to 490 (TVPVLLQILS…AGFAIVFAED (123 aa)) is the Plastocyanin-like 3 domain. Residues H415, H418, and H420 each contribute to the Cu cation site. N456 is a glycosylation site (N-linked (GlcNAc...) asparagine). Residues H472, C473, H474, and H478 each coordinate Cu cation.

This sequence belongs to the multicopper oxidase family. Cu cation serves as cofactor.

Its subcellular location is the secreted. It catalyses the reaction 4 hydroquinone + O2 = 4 benzosemiquinone + 2 H2O. Lignin degradation and detoxification of lignin-derived products. This is Laccase-2 (LCC2) from Trametes versicolor (White-rot fungus).